The sequence spans 411 residues: C6 finger domain transcription factor hasA (411 aa).

The span at 1–17 (MTSTLPYLTSPPATHPS) shows a compositional bias: polar residues. Positions 1–21 (MTSTLPYLTSPPATHPSNSDH) are disordered. The zn(2)-C6 fungal-type DNA-binding region spans 28–54 (CDSCHQCKVKCSGGSPCFRCTSKGLNC).

It localises to the nucleus. Its function is as follows. Transcription factor; part of the gene cluster that mediates the biosynthesis of hexadehydro-astechrome (HAS), a tryptophan-derived iron(III)-complex that acts as a virulence factor in infected mice. Positively regulates the expression of the HAS biosynthetic genes. This chain is C6 finger domain transcription factor hasA, found in Aspergillus fumigatus (strain CBS 144.89 / FGSC A1163 / CEA10) (Neosartorya fumigata).